The chain runs to 144 residues: Large ribosomal subunit protein uL15 (144 aa).

Residues 1–48 are disordered; sequence MIKLECLQDPSPRKRRTKLLGRGPSSGHGKTSGRGHKGDGSRSGYKRR.

Belongs to the universal ribosomal protein uL15 family. As to quaternary structure, part of the 50S ribosomal subunit.

In terms of biological role, binds to the 23S rRNA. The chain is Large ribosomal subunit protein uL15 from Chlamydia trachomatis serovar L2 (strain ATCC VR-902B / DSM 19102 / 434/Bu).